The following is a 404-amino-acid chain: Cysteine desulfurase IscS (404 aa).

Pyridoxal 5'-phosphate is bound by residues 75 to 76, N155, Q183, and 203 to 205; these read AT and SGH. K206 bears the N6-(pyridoxal phosphate)lysine mark. T243 contacts pyridoxal 5'-phosphate. Residue C328 is the Cysteine persulfide intermediate of the active site. Position 328 (C328) interacts with [2Fe-2S] cluster.

It belongs to the class-V pyridoxal-phosphate-dependent aminotransferase family. NifS/IscS subfamily. As to quaternary structure, homodimer. Forms a heterotetramer with IscU, interacts with other sulfur acceptors. Pyridoxal 5'-phosphate serves as cofactor.

It is found in the cytoplasm. The enzyme catalyses (sulfur carrier)-H + L-cysteine = (sulfur carrier)-SH + L-alanine. Its pathway is cofactor biosynthesis; iron-sulfur cluster biosynthesis. Functionally, master enzyme that delivers sulfur to a number of partners involved in Fe-S cluster assembly, tRNA modification or cofactor biosynthesis. Catalyzes the removal of elemental sulfur atoms from cysteine to produce alanine. Functions as a sulfur delivery protein for Fe-S cluster synthesis onto IscU, an Fe-S scaffold assembly protein, as well as other S acceptor proteins. The protein is Cysteine desulfurase IscS of Klebsiella pneumoniae subsp. pneumoniae (strain ATCC 700721 / MGH 78578).